We begin with the raw amino-acid sequence, 450 residues long: Tubulin beta-2 chain (450 aa).

GTP is bound by residues Gln-11, Glu-69, Ser-138, Gly-142, Thr-143, Gly-144, Asn-204, and Asn-226. A Mg(2+)-binding site is contributed by Glu-69. Residues 428–450 (ATAEDDVDGYAEGEAGETYESEQ) are disordered. Residues 429 to 450 (TAEDDVDGYAEGEAGETYESEQ) show a composition bias toward acidic residues.

Belongs to the tubulin family. As to quaternary structure, dimer of alpha and beta chains. A typical microtubule is a hollow water-filled tube with an outer diameter of 25 nm and an inner diameter of 15 nm. Alpha-beta heterodimers associate head-to-tail to form protofilaments running lengthwise along the microtubule wall with the beta-tubulin subunit facing the microtubule plus end conferring a structural polarity. Microtubules usually have 13 protofilaments but different protofilament numbers can be found in some organisms and specialized cells. The cofactor is Mg(2+). Cleaved by caspase ced-3 in vitro.

The protein resides in the cytoplasm. Its subcellular location is the cytoskeleton. Its function is as follows. Tubulin is the major constituent of microtubules, a cylinder consisting of laterally associated linear protofilaments composed of alpha- and beta-tubulin heterodimers. Microtubules grow by the addition of GTP-tubulin dimers to the microtubule end, where a stabilizing cap forms. Below the cap, tubulin dimers are in GDP-bound state, owing to GTPase activity of alpha-tubulin. Required for the normal dynamic behavior of the non-centrosomal microtubules in the epidermal syncytium. Involved in the redistribution of microtubule end-binding protein EB1/ebp-2 caused by wounding. Required to modulate expression in the epidermis of antimicrobial peptides, such as nlp-29, after wounding, or fungal infection. The protein is Tubulin beta-2 chain (tbb-2) of Caenorhabditis elegans.